A 427-amino-acid chain; its full sequence is 3-phosphoshikimate 1-carboxyvinyltransferase (427 aa).

3-phosphoshikimate-binding residues include Lys22, Ser23, and Arg27. Residue Lys22 coordinates phosphoenolpyruvate. Positions 96 and 124 each coordinate phosphoenolpyruvate. 7 residues coordinate 3-phosphoshikimate: Ser169, Ser170, Gln171, Ser197, Asp313, Asn336, and Lys340. Residue Gln171 coordinates phosphoenolpyruvate. Asp313 functions as the Proton acceptor in the catalytic mechanism. The phosphoenolpyruvate site is built by Arg344, Arg386, and Lys411.

It belongs to the EPSP synthase family. In terms of assembly, monomer.

The protein localises to the cytoplasm. It catalyses the reaction 3-phosphoshikimate + phosphoenolpyruvate = 5-O-(1-carboxyvinyl)-3-phosphoshikimate + phosphate. It participates in metabolic intermediate biosynthesis; chorismate biosynthesis; chorismate from D-erythrose 4-phosphate and phosphoenolpyruvate: step 6/7. Functionally, catalyzes the transfer of the enolpyruvyl moiety of phosphoenolpyruvate (PEP) to the 5-hydroxyl of shikimate-3-phosphate (S3P) to produce enolpyruvyl shikimate-3-phosphate and inorganic phosphate. This Salmonella newport (strain SL254) protein is 3-phosphoshikimate 1-carboxyvinyltransferase.